A 378-amino-acid chain; its full sequence is L-asparaginase-like protein GF11609 (378 aa).

The N-terminal stretch at 1–21 (MCSPLPLLILRLLLLTHPSLG) is a signal peptide. 3 disulfide bridges follow: C71/C76, C170/C186, and C325/C352.

Belongs to the Ntn-hydrolase family.

In Drosophila ananassae (Fruit fly), this protein is L-asparaginase-like protein GF11609.